The following is a 103-amino-acid chain: Small ribosomal subunit protein uS10 (103 aa).

It belongs to the universal ribosomal protein uS10 family. In terms of assembly, part of the 30S ribosomal subunit.

Functionally, involved in the binding of tRNA to the ribosomes. This is Small ribosomal subunit protein uS10 from Rubrobacter xylanophilus (strain DSM 9941 / JCM 11954 / NBRC 16129 / PRD-1).